Here is a 1056-residue protein sequence, read N- to C-terminus: ATP-dependent helicase wrn-1 (1056 aa).

The disordered stretch occupies residues 1 to 102 (MISDDDDLPS…SSSDDSDQGD (102 aa)). Tandem repeats lie at residues 17–26 (NEELPETEPE) and 28–37 (NDELPETEPE). A 2 X 10 AA repeats of N-[ED]-E-L-P-E-T-E-P-E region spans residues 17–37 (NEELPETEPEDNDELPETEPE). A compositionally biased stretch (acidic residues) spans 19–38 (ELPETEPEDNDELPETEPES). Residues 43 to 53 (PTVTSNKTENQ) show a composition bias toward polar residues. Over residues 54 to 63 (VADEDYDSFD) the composition is skewed to acidic residues. Positions 236 to 406 (VRNVLGGKDQ…IANLRLRKPL (171 aa)) constitute a Helicase ATP-binding domain. 249–256 (MSTGYGKS) provides a ligand contact to ATP. The DEAH box motif lies at 348-351 (DEAH). Residues 427–583 (MAEDLGLFMK…NLTMMLRQLE (157 aa)) form the Helicase C-terminal domain. Zn(2+) is bound by residues Cys-591, Cys-614, Cys-615, and Cys-618. The disordered stretch occupies residues 749-771 (KEKAAPSTVPGASRSQSTKSSTE). The span at 761–771 (SRSQSTKSSTE) shows a compositional bias: polar residues. The 81-residue stretch at 806-886 (PEKIDQLRSR…VQFSKETGIA (81 aa)) folds into the HRDC domain. The segment at 1018-1056 (QEKPDIQSMPSTSNPSTIKTVPSTPSSSLRAPPLKKFKL) is disordered. The span at 1025–1046 (SMPSTSNPSTIKTVPSTPSSSL) shows a compositional bias: polar residues.

This sequence belongs to the helicase family. RecQ subfamily. Zn(2+) serves as cofactor.

The protein localises to the nucleus. The enzyme catalyses Couples ATP hydrolysis with the unwinding of duplex DNA by translocating in the 3'-5' direction.. It catalyses the reaction ATP + H2O = ADP + phosphate + H(+). In terms of biological role, essential for the formation of DNA replication focal centers; stably associates with foci elements generating binding sites for RP-A. Exhibits a magnesium-dependent ATP-dependent 3'-5' DNA-helicase activity. May be involved in the control of genomic stability. The chain is ATP-dependent helicase wrn-1 (wrn-1) from Caenorhabditis elegans.